The chain runs to 494 residues: Lysine--tRNA ligase (494 aa).

Glu-407 and Glu-414 together coordinate Mg(2+).

It belongs to the class-II aminoacyl-tRNA synthetase family. In terms of assembly, homodimer. Mg(2+) serves as cofactor.

It is found in the cytoplasm. The enzyme catalyses tRNA(Lys) + L-lysine + ATP = L-lysyl-tRNA(Lys) + AMP + diphosphate. This Lactococcus lactis subsp. cremoris (strain MG1363) protein is Lysine--tRNA ligase.